Reading from the N-terminus, the 335-residue chain is Tetraacyldisaccharide 4'-kinase (335 aa).

ATP is bound at residue 58 to 65 (VVGGSGKT).

It belongs to the LpxK family.

The catalysed reaction is a lipid A disaccharide + ATP = a lipid IVA + ADP + H(+). It participates in glycolipid biosynthesis; lipid IV(A) biosynthesis; lipid IV(A) from (3R)-3-hydroxytetradecanoyl-[acyl-carrier-protein] and UDP-N-acetyl-alpha-D-glucosamine: step 6/6. Its function is as follows. Transfers the gamma-phosphate of ATP to the 4'-position of a tetraacyldisaccharide 1-phosphate intermediate (termed DS-1-P) to form tetraacyldisaccharide 1,4'-bis-phosphate (lipid IVA). This chain is Tetraacyldisaccharide 4'-kinase, found in Hydrogenovibrio crunogenus (strain DSM 25203 / XCL-2) (Thiomicrospira crunogena).